We begin with the raw amino-acid sequence, 447 residues long: 3-phosphoshikimate 1-carboxyvinyltransferase 2 (447 aa).

K40, S41, and R45 together coordinate 3-phosphoshikimate. K40 provides a ligand contact to phosphoenolpyruvate. Residues G109 and R138 each contribute to the phosphoenolpyruvate site. Positions 184, 185, 186, 329, and 356 each coordinate 3-phosphoshikimate. Q186 contributes to the phosphoenolpyruvate binding site. The active-site Proton acceptor is D329. R360, R403, and K428 together coordinate phosphoenolpyruvate.

Belongs to the EPSP synthase family. In terms of assembly, monomer.

It localises to the cytoplasm. It catalyses the reaction 3-phosphoshikimate + phosphoenolpyruvate = 5-O-(1-carboxyvinyl)-3-phosphoshikimate + phosphate. It functions in the pathway metabolic intermediate biosynthesis; chorismate biosynthesis; chorismate from D-erythrose 4-phosphate and phosphoenolpyruvate: step 6/7. In terms of biological role, catalyzes the transfer of the enolpyruvyl moiety of phosphoenolpyruvate (PEP) to the 5-hydroxyl of shikimate-3-phosphate (S3P) to produce enolpyruvyl shikimate-3-phosphate and inorganic phosphate. The protein is 3-phosphoshikimate 1-carboxyvinyltransferase 2 of Halalkalibacterium halodurans (strain ATCC BAA-125 / DSM 18197 / FERM 7344 / JCM 9153 / C-125) (Bacillus halodurans).